A 66-amino-acid polypeptide reads, in one-letter code: DNA-directed RNA polymerase subunit omega (66 aa).

This sequence belongs to the RNA polymerase subunit omega family. As to quaternary structure, the RNAP catalytic core consists of 2 alpha, 1 beta, 1 beta' and 1 omega subunit. When a sigma factor is associated with the core the holoenzyme is formed, which can initiate transcription.

It carries out the reaction RNA(n) + a ribonucleoside 5'-triphosphate = RNA(n+1) + diphosphate. Functionally, promotes RNA polymerase assembly. Latches the N- and C-terminal regions of the beta' subunit thereby facilitating its interaction with the beta and alpha subunits. In Clostridium botulinum (strain Alaska E43 / Type E3), this protein is DNA-directed RNA polymerase subunit omega.